The following is a 706-amino-acid chain: Probable cyclic nucleotide-gated ion channel 3 (706 aa).

The Cytoplasmic segment spans residues 1 to 85 (MMNPQRNKFV…NDSYLQSWNK (85 aa)). A helical membrane pass occupies residues 86-106 (IFLLLSVVALAFDPLFFYIPY). Residues 107-119 (VKPERFCLNLDKK) are Extracellular-facing. The chain crosses the membrane as a helical span at residues 120-140 (LQTIACVFRTFIDAFYVVHML). Over 141-174 (FQFHTGFITPSSSGFGRGELNEKHKDIALRYLGS) the chain is Cytoplasmic. Residues 175–195 (YFLIDLLSILPIPQVVVLAIV) traverse the membrane as a helical segment. Over 196 to 208 (PRMRRPASLVAKE) the chain is Extracellular. The helical transmembrane segment at 209–229 (LLKWVIFCQYVPRIARIYPLF) threads the bilayer. Residues 230–247 (KEVTRTSGLVTETAWAGA) are Cytoplasmic-facing. A helical transmembrane segment spans residues 248–268 (ALNLFLYMLASHVFGSFWYLI). At 269–371 (SIERKDRCWR…QNLKTSAFEG (103 aa)) the chain is on the extracellular side. The chain crosses the membrane as a helical span at residues 372-392 (EIIFAIVICISGLVLFALLIG). Residues 393–706 (NMQKYLQSTT…ADPEFPMDET (314 aa)) are Cytoplasmic-facing. A nucleoside 3',5'-cyclic phosphate is bound by residues 477 to 600 (WFQA…KQLR) and D548. Residues 591 to 606 (YRRLHSKQLRHMFRFY) are calmodulin-binding. Residues 611 to 640 (QTWAACFIQAAWKRHCRRKLSKALREEEGK) enclose the IQ domain.

It belongs to the cyclic nucleotide-gated cation channel (TC 1.A.1.5) family. As to quaternary structure, homotetramer or heterotetramer.

The protein localises to the cell membrane. In terms of biological role, probable cyclic nucleotide-gated ion channel. This Arabidopsis thaliana (Mouse-ear cress) protein is Probable cyclic nucleotide-gated ion channel 3 (CNGC3).